Here is a 284-residue protein sequence, read N- to C-terminus: Ermin (284 aa).

The segment at 1–61 is disordered; the sequence is MTDVPATFTQ…APTKGSQEER (61 aa). At Ser-73 the chain carries Phosphoserine. The segment at 108–251 is disordered; sequence TFREGRQWEK…PTLGKKSDIS (144 aa). Basic and acidic residues-rich tracts occupy residues 126–140 and 171–183; these read EIRRQKERITEQPLK and LHSKHDEEQKVWD. Positions 184-200 are enriched in acidic residues; the sequence is EEIDDDDDDNCNDDEDE. Residues 201 to 220 show a composition bias toward basic and acidic residues; sequence VRVIEFKKKHEEVSQFKEEG. 4 positions are modified to phosphoserine: Ser-214, Ser-226, Ser-230, and Ser-233. Positions 225–235 are enriched in low complexity; the sequence is DSPLSSASSQA. At Thr-237 the chain carries Phosphothreonine. Residues 265-284 are binds actin; that stretch reads KIRKGNTKQRIDEFESMMHL.

Binds actin.

Its subcellular location is the cytoplasm. The protein resides in the cytoskeleton. Its function is as follows. Plays a role in cytoskeletal rearrangements during the late wrapping and/or compaction phases of myelinogenesis as well as in maintenance and stability of myelin sheath in the adult. May play an important role in late-stage oligodendroglia maturation, myelin/Ranvier node formation during CNS development, and in the maintenance and plasticity of related structures in the mature CNS. This Pongo abelii (Sumatran orangutan) protein is Ermin (ERMN).